The primary structure comprises 119 residues: Large ribosomal subunit protein uL18 (119 aa).

This sequence belongs to the universal ribosomal protein uL18 family. In terms of assembly, part of the 50S ribosomal subunit; part of the 5S rRNA/L5/L18/L25 subcomplex. Contacts the 5S and 23S rRNAs.

Its function is as follows. This is one of the proteins that bind and probably mediate the attachment of the 5S RNA into the large ribosomal subunit, where it forms part of the central protuberance. In Clostridium botulinum (strain 657 / Type Ba4), this protein is Large ribosomal subunit protein uL18.